An 874-amino-acid polypeptide reads, in one-letter code: Endothelial PAS domain-containing protein 1 (874 aa).

Residues 1–23 (MTADKEKKRSSSELRKEKSRDAA) are disordered. The bHLH domain maps to 14 to 67 (LRKEKSRDAARCRRSKETEVFYELAHELPLPHSVSSHLDKASIMRLAISFLRTH). A DNA-binding region spans residues 26 to 53 (RRSKETEVFYELAHELPLPHSVSSHLDK). One can recognise a PAS 1 domain in the interval 84–154 (DQQMDNLYLK…ENLTLKNGSG (71 aa)). The segment at 171–192 (RMKCTVTNRGRTVNLKSATWKV) is required for heterodimer formation with ARNT. Residues 230–300 (QHPSHMDIPL…KSHQNLCTKG (71 aa)) form the PAS 2 domain. Residues 304-347 (SGQYRMLAKHGGYVWLETQGTVIYNPRNLQPQCIMCVNYVLSEI) enclose the PAC domain. Pro405 is modified (4-hydroxyproline). The interval 438–489 (WVSGLRSHSAQSESGSLPAFTVPQADTPGNTTPSASSSSSCSTPSSPEDYYS) is disordered. Positions 443–452 (RSHSAQSESG) are enriched in polar residues. A compositionally biased stretch (low complexity) spans 464–484 (TPGNTTPSASSSSSCSTPSSP). The interval 495 to 541 (LKIEVIEKLFAMDTEPRDPGSTQTDFSELDLETLAPYIPMDGEDFQL) is NTAD. Position 530 is a 4-hydroxyproline (Pro530). Residues 777 to 803 (LGQPLRHLPPPQPPSTRSSGENAKTGF) are disordered. The tract at residues 834 to 874 (SFEPYLLPELTRYDCEVNVPVPGSSTLLQGRDLLRALDQAT) is CTAD. Thr844 is modified (phosphothreonine). A (3S)-3-hydroxyasparagine modification is found at Asn851.

In terms of assembly, interacts with HIF3A isoform 2. Efficient DNA binding requires dimerization with another bHLH protein. Heterodimerizes with ARNT; heterodimer binds to core DNA sequence 5'-TACGTG-3' within the hypoxia response element (HRE) of target gene promoters. Interacts with CREBBP. Interacts with EGLN1. Interacts with VHL. In terms of processing, in normoxia, is probably hydroxylated on Pro-405 and Pro-530 by EGLN1/PHD1, EGLN2/PHD2 and/or EGLN3/PHD3. The hydroxylated prolines promote interaction with VHL, initiating rapid ubiquitination and subsequent proteasomal degradation. Under hypoxia, proline hydroxylation is impaired and ubiquitination is attenuated, resulting in stabilization. Post-translationally, in normoxia, is hydroxylated on Asn-851 by HIF1AN thus probably abrogating interaction with CREBBP and EP300 and preventing transcriptional activation. Phosphorylated on multiple sites in the CTAD. In terms of processing, the iron and 2-oxoglutarate dependent 3-hydroxylation of asparagine is (S) stereospecific within HIF CTAD domains. In terms of tissue distribution, expressed in most tissues, with highest levels in lung, followed by heart, kidney, brain and liver. Predominantly expressed in endothelial cells. Also found in smooth muscle cells of the uterus, neurons, and brown adipose tissue. High expression in embryonic choroid plexus and kidney glomeruli.

The protein localises to the nucleus. The protein resides in the nucleus speckle. Functionally, transcription factor involved in the induction of oxygen regulated genes. Heterodimerizes with ARNT; heterodimer binds to core DNA sequence 5'-TACGTG-3' within the hypoxia response element (HRE) of target gene promoters. Regulates the vascular endothelial growth factor (VEGF) expression and seems to be implicated in the development of blood vessels and the tubular system of lung. May also play a role in the formation of the endothelium that gives rise to the blood brain barrier. Potent activator of the Tie-2 tyrosine kinase expression. Activation requires recruitment of transcriptional coactivators such as CREBBP and probably EP300. Interaction with redox regulatory protein APEX seems to activate CTAD. The polypeptide is Endothelial PAS domain-containing protein 1 (Epas1) (Mus musculus (Mouse)).